Consider the following 364-residue polypeptide: 1-acyl-sn-glycerol-3-phosphate acyltransferase epsilon (364 aa).

Helical transmembrane passes span Leu-15–Trp-35 and Met-61–Pro-81. The HXXXXD motif motif lies at His-93 to Asp-98. Residues Leu-344–Ala-364 form a helical membrane-spanning segment.

The protein belongs to the 1-acyl-sn-glycerol-3-phosphate acyltransferase family. Widely expressed.

It is found in the endoplasmic reticulum membrane. The protein localises to the nucleus envelope. Its subcellular location is the mitochondrion. The enzyme catalyses a 1-acyl-sn-glycero-3-phosphate + an acyl-CoA = a 1,2-diacyl-sn-glycero-3-phosphate + CoA. It catalyses the reaction 1-(9Z-octadecenoyl)-sn-glycero-3-phosphate + tetradecanoyl-CoA = 1-(9Z)-octadecenoyl-2-tetradecanoyl-sn-glycero-3-phosphate + CoA. The catalysed reaction is pentadecanoyl-CoA + 1-(9Z-octadecenoyl)-sn-glycero-3-phosphate = 1-(9Z)-octadecenoyl-2-pentadecanoyl-sn-glycero-3-phosphate + CoA. It carries out the reaction 1-(9Z-octadecenoyl)-sn-glycero-3-phosphate + octadecanoyl-CoA = 1-(9Z-octadecenoyl)-2-octadecanoyl-sn-glycero-3-phosphate + CoA. The enzyme catalyses nonadecanoyl-CoA + 1-(9Z-octadecenoyl)-sn-glycero-3-phosphate = 1-(9Z)-octadecenoyl-2-nonadecanoyl-sn-glycero-3-phosphate + CoA. It catalyses the reaction 1-(9Z-octadecenoyl)-sn-glycero-3-phosphoethanolamine + (9Z)-octadecenoyl-CoA = 1,2-di-(9Z-octadecenoyl)-sn-glycero-3-phosphoethanolamine + CoA. The catalysed reaction is 1-(9Z-octadecenoyl)-sn-glycero-3-phosphocholine + (9Z)-octadecenoyl-CoA = 1,2-di-(9Z-octadecenoyl)-sn-glycero-3-phosphocholine + CoA. It carries out the reaction 1-(9Z-octadecenoyl)-sn-glycero-3-phospho-(1D-myo-inositol) + (5Z,8Z,11Z,14Z)-eicosatetraenoyl-CoA = 1-(9Z-octadecenoyl)-2-(5Z,8Z,11Z,14Z-eicosatetraenoyl)-sn-glycero-3-phospho-1D-myo-inositol + CoA. The enzyme catalyses 1-(9Z-octadecenoyl)-sn-glycero-3-phospho-L-serine + (9Z)-octadecenoyl-CoA = 1,2-di-(9Z)-octadecenoyl-sn-glycero-3-phospho-L-serine + CoA. It catalyses the reaction 1-(9Z-octadecenoyl)-sn-glycero-3-phospho-L-serine + (5Z,8Z,11Z,14Z)-eicosatetraenoyl-CoA = 1-(9Z-octadecenoyl)-2-(5Z,8Z,11Z,14Z-eicosatetraenoyl)-sn-glycero-3-phospho-L-serine + CoA. The catalysed reaction is 1-hexadecanoyl-sn-glycero-3-phosphate + (9Z)-octadecenoyl-CoA = 1-hexadecanoyl-2-(9Z-octadecenoyl)-sn-glycero-3-phosphate + CoA. It carries out the reaction 1-heptadecanoyl-sn-glycero-3-phosphate + (9Z)-octadecenoyl-CoA = 1-heptadecanoyl-2-(9Z)-octadecenoyl-sn-glycero-3-phosphate + CoA. The enzyme catalyses 1-(5Z,8Z,11Z,14Z-eicosatetraenoyl)-sn-glycero-3-phosphate + (9Z)-octadecenoyl-CoA = 1-(5Z,8Z,11Z,14Z)-eicosatetraenoyl-2-(9Z)-octadecenoyl-sn-glycero-3-phosphate + CoA. It catalyses the reaction 1-octadecanoyl-sn-glycero-3-phosphate + (9Z)-octadecenoyl-CoA = 1-octadecanoyl-2-(9Z-octadecenoyl)-sn-glycero-3-phosphate + CoA. The catalysed reaction is 1-(9Z-octadecenoyl)-sn-glycero-3-phosphate + (5Z,8Z,11Z,14Z)-eicosatetraenoyl-CoA = 1-(9Z)-octadecenoyl-2-(5Z,8Z,11Z,14Z)-eicosatetraenoyl-sn-glycero-3-phosphate + CoA. It carries out the reaction heptadecanoyl-CoA + 1-(9Z-octadecenoyl)-sn-glycero-3-phosphate = 1-(9Z)-octadecenoyl-2-heptadecanoyl-sn-glycero-3-phosphate + CoA. The enzyme catalyses 1-(9Z-octadecenoyl)-sn-glycero-3-phosphocholine + (5Z,8Z,11Z,14Z)-eicosatetraenoyl-CoA = 1-(9Z)-octadecenoyl-2-(5Z,8Z,11Z,14Z)-icosatetraenoyl-sn-glycero-3-phosphocholine + CoA. It catalyses the reaction 1-(9Z-octadecenoyl)-sn-glycero-3-phosphate + (9Z)-octadecenoyl-CoA = 1,2-di-(9Z-octadecenoyl)-sn-glycero-3-phosphate + CoA. The catalysed reaction is 1-(9Z-octadecenoyl)-sn-glycero-3-phosphate + hexadecanoyl-CoA = 1-hexadecanoyl-2-(9Z-octadecenoyl)-sn-glycero-3-phosphate + CoA. Its pathway is phospholipid metabolism; CDP-diacylglycerol biosynthesis; CDP-diacylglycerol from sn-glycerol 3-phosphate: step 2/3. Functionally, converts 1-acyl-sn-glycerol-3-phosphate (lysophosphatidic acid or LPA) into 1,2-diacyl-sn-glycerol-3-phosphate (phosphatidic acid or PA) by incorporating an acyl moiety at the sn-2 position of the glycerol backbone. Acts on LPA containing saturated or unsaturated fatty acids C15:0-C20:4 at the sn-1 position using C18:1-CoA as the acyl donor. Also acts on lysophosphatidylethanolamine using oleoyl-CoA, but not arachidonoyl-CoA, and lysophosphatidylinositol using arachidonoyl-CoA, but not oleoyl-CoA. Activity toward lysophosphatidylglycerol not detectable. This chain is 1-acyl-sn-glycerol-3-phosphate acyltransferase epsilon (AGPAT5), found in Homo sapiens (Human).